Here is a 703-residue protein sequence, read N- to C-terminus: Zinc finger protein 750 (703 aa).

Residues 25–51 (YKCFQCPFTCNEKSHLFNHMKYGLCKN) form a CCHC-type zinc finger. Zn(2+) is bound by residues C27, C30, H43, and C49. Disordered regions lie at residues 64–113 (KCPK…DAKE), 350–527 (PASS…YGPM), 553–614 (WAPR…KQTA), and 630–703 (RVAD…TRVS). Polar residues predominate over residues 67–106 (KSSSLDPKQTHQPEPTSKPATSKSLLNGLSSFDPKSQQGS). Low complexity predominate over residues 352–361 (SSPSELNLSS). Over residues 367 to 394 (TECEKGSPVPEAKDPSKDGQRDAEEAKM) the composition is skewed to basic and acidic residues. 2 stretches are compositionally biased toward polar residues: residues 410–421 (SPTNFTQTSQTF) and 456–477 (GSES…SLQA). The span at 574–611 (TETKGSEDRTSRVETPQDKAHSRTTPDVHTEDSSDEQK) shows a compositional bias: basic and acidic residues. Positions 639–655 (QEPTRQDVPTLSATENL) are enriched in polar residues.

The protein resides in the nucleus. Transcription factor involved in epidermis differentiation. Required for terminal epidermal differentiation: acts downstream of p63/TP63 and activates expression of late epidermal differentiation genes. Specifically binds to the promoter of KLF4 and promotes its expression. This is Zinc finger protein 750 (Znf750) from Mus musculus (Mouse).